The chain runs to 276 residues: MAGMGKPYGGRPGDAFEGLVQRIRLIVPATLRGGGGESGPYSPSNPPSRCAFQFHGQDGSDEAFPIEYVLRLMNDWADVPCNPYLRVQNTGVSVLFQGFFNRPHGAPGGAITAEQTNVILHSTETTGLSLGDLDDVKGRLGLDARPMMASMWISCFVRMPRVQLAFRFMGPEDAVRTRRILCRAAEQALARRRRSRRSQDDYGAVVVAAAHHSSGAPGPGVAASGPPAPPGRGPARPWHQAVQLFRAPRPGPPALLLLAAGLFLGAAIWWAVGARL.

The Perinuclear space portion of the chain corresponds to 1–253 (MAGMGKPYGG…LFRAPRPGPP (253 aa)). Residues 212–225 (HSSGAPGPGVAASG) are compositionally biased toward low complexity. A disordered region spans residues 212–237 (HSSGAPGPGVAASGPPAPPGRGPARP). A helical transmembrane segment spans residues 254 to 274 (ALLLLAAGLFLGAAIWWAVGA). Residues 275–276 (RL) are Nuclear-facing.

It belongs to the herpesviridae NEC2 protein family. In terms of assembly, forms a heterohexameric complex with NEC1. Phosphorylated.

It localises to the host nucleus inner membrane. In terms of biological role, plays an essential role in virion nuclear egress, the first step of virion release from infected cell. Within the host nucleus, NEC1 interacts with the newly formed capsid through the vertexes and directs it to the inner nuclear membrane by associating with NEC2. Induces the budding of the capsid at the inner nuclear membrane as well as its envelopment into the perinuclear space. There, the NEC1/NEC2 complex promotes the fusion of the enveloped capsid with the outer nuclear membrane and the subsequent release of the viral capsid into the cytoplasm where it will reach the secondary budding sites in the host Golgi or trans-Golgi network. This chain is Nuclear egress protein 2, found in Homo sapiens (Human).